The primary structure comprises 23 residues: Ocellatin-LB2 (23 aa).

Asn23 carries the post-translational modification Asparagine amide.

As to expression, expressed by the skin glands.

It localises to the secreted. In terms of biological role, antibacterial peptide that inhibits the Gram-negative bacterium A.actinomycetemcomitans ATCC 29522 (MIC=210 uM). No activity against the bacteria E.coli ATCC 25922 and S.aureus ATCC 25923, or the fungi C.albicans ATCC 18804 and C.lusitaniae ATCC 56936. Does not show hemolytic activity towards rabbit erythrocytes. The protein is Ocellatin-LB2 of Leptodactylus labyrinthicus (Labyrinth frog).